The chain runs to 636 residues: Threonine--tRNA ligase (636 aa).

The region spanning 1–63 is the TGS domain; the sequence is MPMITITLPD…EHDASLRIIT (63 aa). Residues 245–536 are catalytic; it reads DHRKIGKAQD…LIEHHAGAFP (292 aa). 3 residues coordinate Zn(2+): C336, H387, and H513.

It belongs to the class-II aminoacyl-tRNA synthetase family. Homodimer. The cofactor is Zn(2+).

It is found in the cytoplasm. The catalysed reaction is tRNA(Thr) + L-threonine + ATP = L-threonyl-tRNA(Thr) + AMP + diphosphate + H(+). Its function is as follows. Catalyzes the attachment of threonine to tRNA(Thr) in a two-step reaction: L-threonine is first activated by ATP to form Thr-AMP and then transferred to the acceptor end of tRNA(Thr). Also edits incorrectly charged L-seryl-tRNA(Thr). This chain is Threonine--tRNA ligase, found in Xanthomonas campestris pv. campestris (strain 8004).